The primary structure comprises 53 residues: Cytochrome c-552 (53 aa).

Cys-19, Cys-22, His-23, and Met-44 together coordinate heme c.

Binds 1 heme c group covalently per subunit.

It is found in the cell membrane. This Schinkia azotoformans (Bacillus azotoformans) protein is Cytochrome c-552.